The chain runs to 295 residues: Putative aquaporin-12A (295 aa).

A helical transmembrane segment spans residues 1-21 (MAGLNVSLSFFFATFALCEAA). Residues 22-54 (RRASKALLPVGAYEVFAREAMRTLVELGPWAGD) are Extracellular-facing. A helical transmembrane segment spans residues 55–75 (FGPDLLLTLLFLLFLAHGVTL). The Cytoplasmic segment spans residues 76–99 (DGASANPTVSLQEFLMAEQSLPGT). Residues 77 to 114 (GASANPTVSLQEFLMAEQSLPGTLLKLAAQGLGMQAAC) constitute an intramembrane region (discontinuously helical). The short motif at 81 to 83 (NPT) is the NPA 1 element. A helical transmembrane segment spans residues 100–126 (LLKLAAQGLGMQAACTLMRLCWAWELS). The Extracellular segment spans residues 127-145 (DLHLLQSLMAQSCSSALRT). The chain crosses the membrane as a helical span at residues 146-166 (SVPHGALVEAACAFCFHLTLL). Residues 167–178 (HLRHSPPAYSGP) are Cytoplasmic-facing. A helical transmembrane segment spans residues 179 to 199 (AVALLVTVTAYTAGPFTSAFF). An intramembrane region (discontinuously helical) is located at residues 195–206 (TSAFFNPALAAS). Positions 200–202 (NPA) match the NPA 2 motif. The Extracellular portion of the chain corresponds to 200-215 (NPALAASVTFACSGHT). Residues 216–236 (LLEYVQVYWLGPLTGMVLAVL) form a helical membrane-spanning segment. Over 237–295 (LHQGRLPHLFQRNLFYGQKNKYRAPRGKPAPASGDTQTPAKGSSVREPGRSGVEGPHSS) the chain is Cytoplasmic. Positions 257 to 295 (KYRAPRGKPAPASGDTQTPAKGSSVREPGRSGVEGPHSS) are disordered.

Belongs to the MIP/aquaporin (TC 1.A.8) family. AQP11/AQP12 subfamily. In terms of assembly, homotetramer; each monomer provides an independent water pore. Restricted to the pancreas.

It localises to the membrane. The enzyme catalyses H2O(in) = H2O(out). Functionally, putative aquaporin. Could form homotetrameric transmembrane channels, with each monomer independently mediating water transport across the plasma membrane along its osmotic gradient. In Homo sapiens (Human), this protein is Putative aquaporin-12A.